The sequence spans 170 residues: Peptide deformylase-like (170 aa).

Residue E139 is part of the active site.

It belongs to the polypeptide deformylase family.

The protein is Peptide deformylase-like of Bradyrhizobium diazoefficiens (strain JCM 10833 / BCRC 13528 / IAM 13628 / NBRC 14792 / USDA 110).